The chain runs to 131 residues: UPF0102 protein YraN (131 aa).

Residues Met1–Thr19 show a composition bias toward polar residues. The segment at Met1–Asp21 is disordered.

It belongs to the UPF0102 family.

The sequence is that of UPF0102 protein YraN from Escherichia coli O7:K1 (strain IAI39 / ExPEC).